Reading from the N-terminus, the 136-residue chain is ATP synthase epsilon chain (136 aa).

The protein belongs to the ATPase epsilon chain family. As to quaternary structure, F-type ATPases have 2 components, CF(1) - the catalytic core - and CF(0) - the membrane proton channel. CF(1) has five subunits: alpha(3), beta(3), gamma(1), delta(1), epsilon(1). CF(0) has three main subunits: a, b and c.

The protein resides in the cell membrane. Functionally, produces ATP from ADP in the presence of a proton gradient across the membrane. The polypeptide is ATP synthase epsilon chain (Macrococcus caseolyticus (strain JCSC5402) (Macrococcoides caseolyticum)).